Consider the following 365-residue polypeptide: Histidinol-phosphate aminotransferase 2 (365 aa).

At Lys-222 the chain carries N6-(pyridoxal phosphate)lysine.

Belongs to the class-II pyridoxal-phosphate-dependent aminotransferase family. Histidinol-phosphate aminotransferase subfamily. In terms of assembly, homodimer. The cofactor is pyridoxal 5'-phosphate.

It catalyses the reaction L-histidinol phosphate + 2-oxoglutarate = 3-(imidazol-4-yl)-2-oxopropyl phosphate + L-glutamate. Its pathway is amino-acid biosynthesis; L-histidine biosynthesis; L-histidine from 5-phospho-alpha-D-ribose 1-diphosphate: step 7/9. The chain is Histidinol-phosphate aminotransferase 2 (hisC2) from Bordetella parapertussis (strain 12822 / ATCC BAA-587 / NCTC 13253).